Here is a 302-residue protein sequence, read N- to C-terminus: Sulfate adenylyltransferase subunit 2 (302 aa).

Residues 279–302 form a disordered region; sequence ERQGRAIDHDQSGSMELKKRQGYF. Basic and acidic residues predominate over residues 280 to 302; that stretch reads RQGRAIDHDQSGSMELKKRQGYF.

This sequence belongs to the PAPS reductase family. CysD subfamily. In terms of assembly, heterodimer composed of CysD, the smaller subunit, and CysN.

It catalyses the reaction sulfate + ATP + H(+) = adenosine 5'-phosphosulfate + diphosphate. It functions in the pathway sulfur metabolism; hydrogen sulfide biosynthesis; sulfite from sulfate: step 1/3. In terms of biological role, with CysN forms the ATP sulfurylase (ATPS) that catalyzes the adenylation of sulfate producing adenosine 5'-phosphosulfate (APS) and diphosphate, the first enzymatic step in sulfur assimilation pathway. APS synthesis involves the formation of a high-energy phosphoric-sulfuric acid anhydride bond driven by GTP hydrolysis by CysN coupled to ATP hydrolysis by CysD. This is Sulfate adenylyltransferase subunit 2 from Photobacterium profundum (strain SS9).